Reading from the N-terminus, the 417-residue chain is NADH-quinone oxidoreductase subunit D (417 aa).

This sequence belongs to the complex I 49 kDa subunit family. NDH-1 is composed of 14 different subunits. Subunits NuoB, C, D, E, F, and G constitute the peripheral sector of the complex.

The protein localises to the cell inner membrane. It catalyses the reaction a quinone + NADH + 5 H(+)(in) = a quinol + NAD(+) + 4 H(+)(out). In terms of biological role, NDH-1 shuttles electrons from NADH, via FMN and iron-sulfur (Fe-S) centers, to quinones in the respiratory chain. The immediate electron acceptor for the enzyme in this species is believed to be ubiquinone. Couples the redox reaction to proton translocation (for every two electrons transferred, four hydrogen ions are translocated across the cytoplasmic membrane), and thus conserves the redox energy in a proton gradient. The sequence is that of NADH-quinone oxidoreductase subunit D from Nitrosospira multiformis (strain ATCC 25196 / NCIMB 11849 / C 71).